Here is a 380-residue protein sequence, read N- to C-terminus: Lipid-A-disaccharide synthase (380 aa).

Belongs to the LpxB family.

It catalyses the reaction a lipid X + a UDP-2-N,3-O-bis[(3R)-3-hydroxyacyl]-alpha-D-glucosamine = a lipid A disaccharide + UDP + H(+). The protein operates within bacterial outer membrane biogenesis; LPS lipid A biosynthesis. Functionally, condensation of UDP-2,3-diacylglucosamine and 2,3-diacylglucosamine-1-phosphate to form lipid A disaccharide, a precursor of lipid A, a phosphorylated glycolipid that anchors the lipopolysaccharide to the outer membrane of the cell. This chain is Lipid-A-disaccharide synthase, found in Pseudomonas savastanoi pv. phaseolicola (strain 1448A / Race 6) (Pseudomonas syringae pv. phaseolicola (strain 1448A / Race 6)).